Here is a 437-residue protein sequence, read N- to C-terminus: Ribosomal protein uS12 methylthiotransferase RimO (437 aa).

The 111-residue stretch at 4-114 (PRIGFISLGC…VMNAVHEHLP (111 aa)) folds into the MTTase N-terminal domain. [4Fe-4S] cluster-binding residues include Cys13, Cys49, Cys78, Cys145, Cys149, and Cys152. In terms of domain architecture, Radical SAM core spans 131–368 (LTPRHYAYLK…MEVQERISAA (238 aa)). A TRAM domain is found at 371–437 (RTRIGRTETV…AHDLWARLAD (67 aa)).

The protein belongs to the methylthiotransferase family. RimO subfamily. The cofactor is [4Fe-4S] cluster.

It is found in the cytoplasm. It catalyses the reaction L-aspartate(89)-[ribosomal protein uS12]-hydrogen + (sulfur carrier)-SH + AH2 + 2 S-adenosyl-L-methionine = 3-methylsulfanyl-L-aspartate(89)-[ribosomal protein uS12]-hydrogen + (sulfur carrier)-H + 5'-deoxyadenosine + L-methionine + A + S-adenosyl-L-homocysteine + 2 H(+). Functionally, catalyzes the methylthiolation of an aspartic acid residue of ribosomal protein uS12. The chain is Ribosomal protein uS12 methylthiotransferase RimO from Methylococcus capsulatus (strain ATCC 33009 / NCIMB 11132 / Bath).